A 91-amino-acid chain; its full sequence is uncharacterized protein (91 aa).

A helical membrane pass occupies residues 12–34; it reads FAIVYANITFLFYYLLDFTLPFH.

It is found in the membrane. This is an uncharacterized protein from Saccharomyces cerevisiae (strain ATCC 204508 / S288c) (Baker's yeast).